Here is a 180-residue protein sequence, read N- to C-terminus: Translation initiation factor IF-3 (180 aa).

The protein belongs to the IF-3 family. Monomer.

It localises to the cytoplasm. Functionally, IF-3 binds to the 30S ribosomal subunit and shifts the equilibrium between 70S ribosomes and their 50S and 30S subunits in favor of the free subunits, thus enhancing the availability of 30S subunits on which protein synthesis initiation begins. The polypeptide is Translation initiation factor IF-3 (Hyphomonas neptunium (strain ATCC 15444)).